A 477-amino-acid chain; its full sequence is Inner membrane transporter YgjI (477 aa).

Topologically, residues 1–8 are periplasmic; the sequence is MSDTKRNT. A helical transmembrane segment spans residues 9 to 29; it reads IGKFGLLSLTFAAVYSFNNVI. Residues 30–41 are Cytoplasmic-facing; that stretch reads NNNIELGLASAP. A helical membrane pass occupies residues 42–62; that stretch reads MFFLATIFYFIPFCLIIAEFV. Over 63 to 83 the chain is Periplasmic; sequence SLNKNSEAGVYAWVKSSLGGR. The helical transmembrane segment at 84–104 threads the bilayer; it reads WAFITAYTYWFVNLFFFTSLL. Topologically, residues 105-120 are cytoplasmic; that stretch reads PRVIAYASYAFLGYEY. Residues 121-141 form a helical membrane-spanning segment; it reads IMTPVATTIISMVLFAFSTWV. Topologically, residues 142 to 158 are periplasmic; that stretch reads STNGAKMLGPITSVTST. A helical transmembrane segment spans residues 159 to 179; sequence LMLLLTLSYILLAGTALVGGV. Topologically, residues 180-196 are cytoplasmic; that stretch reads QPADAITVDAMIPNFNW. Residues 197-217 traverse the membrane as a helical segment; the sequence is AFLGVTTWIFMAAGGAESVAV. At 218–232 the chain is on the periplasmic side; the sequence is YVNDVKGGSKSFVKV. The chain crosses the membrane as a helical span at residues 233 to 253; the sequence is IILAGIFIGVLYSVSSVLINV. Residues 254 to 263 are Cytoplasmic-facing; sequence FVSSKELKFT. A helical membrane pass occupies residues 264-284; sequence GGSVQVFHGMAAYFGLPEALM. Residues 285–286 are Periplasmic-facing; that stretch reads NR. A helical membrane pass occupies residues 287 to 307; sequence FVGLVSFTAMFGSLLMWTATP. At 308-335 the chain is on the cytoplasmic side; that stretch reads VKIFFSEIPEGIFGKKTVELNENGVPAR. The helical transmembrane segment at 336-356 threads the bilayer; sequence AAWIQFLIVIPLMIIPMLGSN. The Periplasmic portion of the chain corresponds to 357–364; the sequence is TVQDLMNT. The chain crosses the membrane as a helical span at residues 365–385; that stretch reads IINMTAAASMLPPLFIMLAYL. The Cytoplasmic segment spans residues 386–405; it reads NLRAKLDHLPRDFRMGSRRT. A helical membrane pass occupies residues 406 to 426; the sequence is GIIVVSMLIAIFAVGFVASTF. Residues 427–431 are Periplasmic-facing; the sequence is PTGAN. A helical membrane pass occupies residues 432-452; sequence ILTIIFYNVGGIVIFLGFAWW. Residues 453–477 are Cytoplasmic-facing; that stretch reads KYSKYIKGLTAEERHIEATPASNVD.

Belongs to the amino acid-polyamine-organocation (APC) superfamily.

Its subcellular location is the cell inner membrane. The sequence is that of Inner membrane transporter YgjI (ygjI) from Escherichia coli (strain K12).